Here is a 96-residue protein sequence, read N- to C-terminus: Small ribosomal subunit protein bS6 (96 aa).

It belongs to the bacterial ribosomal protein bS6 family.

In terms of biological role, binds together with bS18 to 16S ribosomal RNA. In Gloeobacter violaceus (strain ATCC 29082 / PCC 7421), this protein is Small ribosomal subunit protein bS6.